Consider the following 178-residue polypeptide: Hypoxanthine phosphoribosyltransferase (178 aa).

Positions 43 and 44 each coordinate diphosphate. GMP is bound at residue Glu99. Glu99 is an IMP binding site. Mg(2+) contacts are provided by Glu99 and Asp100. Asp103 acts as the Proton acceptor in catalysis. Residues 103 to 108, Lys131, and Asp159 each bind GMP; that span reads DSGNTL. IMP is bound by residues 103 to 108 and Lys131; that span reads DSGNTL. Arg165 is a binding site for diphosphate.

Belongs to the purine/pyrimidine phosphoribosyltransferase family. As to quaternary structure, homotetramer. Mg(2+) serves as cofactor.

It localises to the cytoplasm. The catalysed reaction is IMP + diphosphate = hypoxanthine + 5-phospho-alpha-D-ribose 1-diphosphate. The enzyme catalyses GMP + diphosphate = guanine + 5-phospho-alpha-D-ribose 1-diphosphate. The protein operates within purine metabolism; IMP biosynthesis via salvage pathway; IMP from hypoxanthine: step 1/1. In terms of biological role, purine salvage pathway enzyme which catalyzes the transfer of the ribosyl-5-phosphate group from 5-phospho-alpha-D-ribose 1-diphosphate (PRPP) to the N9 position of hypoxanthine to yield IMP (inosine 5'-monophosphate). To a lesser extent, can also act on guanine leading to GMP, but shows a highly less efficient activity with xanthine. The protein is Hypoxanthine phosphoribosyltransferase (hpt) of Shigella flexneri.